The primary structure comprises 428 residues: Adenylosuccinate synthetase (428 aa).

GTP-binding positions include 12-18 and 40-42; these read GDEGKGK and GHT. The Proton acceptor role is filled by Asp13. Mg(2+) is bound by residues Asp13 and Gly40. IMP contacts are provided by residues 13–16, 38–41, Thr128, Arg142, Gln223, Thr238, and Arg302; these read DEGK and NAGH. The active-site Proton donor is the His41. 298–304 contacts substrate; that stretch reads TTTGRPR. GTP-binding positions include Arg304, 330–332, and 412–414; these read SID and SVG.

The protein belongs to the adenylosuccinate synthetase family. As to quaternary structure, homodimer. Requires Mg(2+) as cofactor.

The protein localises to the cytoplasm. It carries out the reaction IMP + L-aspartate + GTP = N(6)-(1,2-dicarboxyethyl)-AMP + GDP + phosphate + 2 H(+). It participates in purine metabolism; AMP biosynthesis via de novo pathway; AMP from IMP: step 1/2. In terms of biological role, plays an important role in the de novo pathway of purine nucleotide biosynthesis. Catalyzes the first committed step in the biosynthesis of AMP from IMP. This chain is Adenylosuccinate synthetase, found in Geobacillus sp. (strain WCH70).